The primary structure comprises 151 residues: Myosin catalytic light chain, smooth muscle (151 aa).

A1 bears the N-acetylalanine mark. EF-hand domains are found at residues 6-41 (DRIT…LGQN), 83-118 (GSYE…LGEK), and 119-151 (MSEE…LLEG).

Functionally, in molluscan muscle, calcium regulation is associated with myosin rather than with actin. Muscle myosin contains two types of light chains: the catalytic light chain, essential for ATPase activity, and the regulatory light chain, a calcium-binding protein responsible for Ca(2+) dependent binding and Ca(2+) dependent Mg-ATPase activity. This is Myosin catalytic light chain, smooth muscle from Halocynthia roretzi (Sea squirt).